The chain runs to 427 residues: 3-phosphoshikimate 1-carboxyvinyltransferase (427 aa).

Residues Lys-22, Ser-23, and Arg-27 each contribute to the 3-phosphoshikimate site. Lys-22 is a phosphoenolpyruvate binding site. Residues Gly-96 and Arg-124 each coordinate phosphoenolpyruvate. Ser-169, Ser-170, Gln-171, Ser-197, Asp-313, Asn-336, and Lys-340 together coordinate 3-phosphoshikimate. Gln-171 provides a ligand contact to phosphoenolpyruvate. Asp-313 (proton acceptor) is an active-site residue. Residues Arg-344, Arg-386, and Lys-411 each contribute to the phosphoenolpyruvate site.

It belongs to the EPSP synthase family. Monomer.

Its subcellular location is the cytoplasm. The enzyme catalyses 3-phosphoshikimate + phosphoenolpyruvate = 5-O-(1-carboxyvinyl)-3-phosphoshikimate + phosphate. The protein operates within metabolic intermediate biosynthesis; chorismate biosynthesis; chorismate from D-erythrose 4-phosphate and phosphoenolpyruvate: step 6/7. Its function is as follows. Catalyzes the transfer of the enolpyruvyl moiety of phosphoenolpyruvate (PEP) to the 5-hydroxyl of shikimate-3-phosphate (S3P) to produce enolpyruvyl shikimate-3-phosphate and inorganic phosphate. This Salmonella agona (strain SL483) protein is 3-phosphoshikimate 1-carboxyvinyltransferase.